The chain runs to 341 residues: Alanine racemase (341 aa).

The active-site Proton acceptor; specific for D-alanine is lysine 33. Lysine 33 carries the N6-(pyridoxal phosphate)lysine modification. Arginine 126 contributes to the substrate binding site. Tyrosine 236 acts as the Proton acceptor; specific for L-alanine in catalysis. Methionine 284 is a substrate binding site.

The protein belongs to the alanine racemase family. Pyridoxal 5'-phosphate serves as cofactor.

The enzyme catalyses L-alanine = D-alanine. The protein operates within amino-acid biosynthesis; D-alanine biosynthesis; D-alanine from L-alanine: step 1/1. Functionally, catalyzes the interconversion of L-alanine and D-alanine. The chain is Alanine racemase (alr) from Aquifex pyrophilus.